A 247-amino-acid polypeptide reads, in one-letter code: Peroxisomal membrane protein 11A (247 aa).

Residues 1–83 are Cytoplasmic-facing; the sequence is MDAFIRFTNQ…SVRATDLVPR (83 aa). Residues 84–105 form a helical membrane-spanning segment; it reads ICLTLASLNRVIYFICDTVLFV. Residues 106–219 lie on the Lumenal side of the membrane; the sequence is RSTGLASGVN…DQLGIYKSNP (114 aa). The helical transmembrane segment at 220–239 threads the bilayer; the sequence is GIIGLGGLVSSVAGIITVAY. The segment at 220–239 is required for homodimerization, interaction with PEX11G, and peroxisomal localization; it reads GIIGLGGLVSSVAGIITVAY. Residues 240-247 lie on the Cytoplasmic side of the membrane; that stretch reads PQMKLKTQ.

Belongs to the peroxin-11 family. As to quaternary structure, homodimer. Heterodimer with PEX11G. Probably interacts with COPB2 and COPA. Interacts with PEX19. Interacts with FIS1.

The protein localises to the peroxisome membrane. In terms of biological role, may be involved in peroxisomal proliferation and may regulate peroxisomes division. May mediate binding of coatomer proteins to the peroxisomal membrane. Promotes membrane protrusion and elongation on the peroxisomal surface. This is Peroxisomal membrane protein 11A (PEX11A) from Bos taurus (Bovine).